A 466-amino-acid chain; its full sequence is Methylenetetrahydrofolate--tRNA-(uracil-5-)-methyltransferase TrmFO (466 aa).

14-19 contributes to the FAD binding site; that stretch reads GGGLAG.

This sequence belongs to the MnmG family. TrmFO subfamily. It depends on FAD as a cofactor.

It is found in the cytoplasm. It catalyses the reaction uridine(54) in tRNA + (6R)-5,10-methylene-5,6,7,8-tetrahydrofolate + NADH + H(+) = 5-methyluridine(54) in tRNA + (6S)-5,6,7,8-tetrahydrofolate + NAD(+). It carries out the reaction uridine(54) in tRNA + (6R)-5,10-methylene-5,6,7,8-tetrahydrofolate + NADPH + H(+) = 5-methyluridine(54) in tRNA + (6S)-5,6,7,8-tetrahydrofolate + NADP(+). Catalyzes the folate-dependent formation of 5-methyl-uridine at position 54 (M-5-U54) in all tRNAs. This is Methylenetetrahydrofolate--tRNA-(uracil-5-)-methyltransferase TrmFO from Brucella abortus (strain 2308).